Here is a 417-residue protein sequence, read N- to C-terminus: Serine hydroxymethyltransferase (417 aa).

(6S)-5,6,7,8-tetrahydrofolate contacts are provided by residues leucine 121 and 125–127 (GHL). Position 229 is an N6-(pyridoxal phosphate)lysine (lysine 229). Residue 355–357 (SPF) coordinates (6S)-5,6,7,8-tetrahydrofolate.

The protein belongs to the SHMT family. In terms of assembly, homodimer. Requires pyridoxal 5'-phosphate as cofactor.

Its subcellular location is the cytoplasm. It carries out the reaction (6R)-5,10-methylene-5,6,7,8-tetrahydrofolate + glycine + H2O = (6S)-5,6,7,8-tetrahydrofolate + L-serine. The protein operates within one-carbon metabolism; tetrahydrofolate interconversion. It participates in amino-acid biosynthesis; glycine biosynthesis; glycine from L-serine: step 1/1. In terms of biological role, catalyzes the reversible interconversion of serine and glycine with tetrahydrofolate (THF) serving as the one-carbon carrier. This reaction serves as the major source of one-carbon groups required for the biosynthesis of purines, thymidylate, methionine, and other important biomolecules. Also exhibits THF-independent aldolase activity toward beta-hydroxyamino acids, producing glycine and aldehydes, via a retro-aldol mechanism. The protein is Serine hydroxymethyltransferase of Klebsiella pneumoniae (strain 342).